We begin with the raw amino-acid sequence, 658 residues long: MEGRFQLVAPYEPQGDQPQAIAKLVDGLRRGVKHQTLLGATGTGKTFTISNVIAQVNKPTLVIAHNKTLAGQLYSELKEFFPHNAVEYFVSYYDYYQPEAYVPQTDTYIEKDAKINDEIDKLRHSATSALFERRDVIIVASVSCIYGLGSPEEYRELVVSLRVGMEIERNALLRRLVDIQYDRNDIDFRRGTFRVRGDVVEIFPASRDEHCIRVEFFGDEIERIREVDALTGEVLGEREHVAIFPASHFVTREEKMRLAIQNIEQELEERLAELRAQGKLLEAQRLEQRTRYDLEMMREMGFCSGIENYSRHLALRPPGSTPYTLLDYFPDDFLIIVDESHVTLPQLRGMYNGDRARKQVLVDHGFRLPSALDNRPLTFEEFEQKINQIIYVSATPGPYELEHSPGVVEQIIRPTGLLDPTIDVRPTKGQIDDLIGEIRERVERNERTLVTTLTKKMAEDLTDYLKEAGIKVAYLHSEIKTLERIEIIRDLRLGKYDVLVGINLLREGLDIPEVSLVAILDADKEGFLRSERSLIQTIGRAARNANGHVIMYADTITKSMEVAIQETKRRRAIQEEYNRKHGIVPRTVKKEIRDVIRATYAAEETEMYEAKPAAAMTKQEREELIRTLEAEMKEAAKALDFERAAQLRDIIFELKAEG.

The 389-residue stretch at 26-414 (DGLRRGVKHQ…PGVVEQIIRP (389 aa)) folds into the Helicase ATP-binding domain. 39–46 (GATGTGKT) serves as a coordination point for ATP. The Beta-hairpin motif lies at 92–115 (YYDYYQPEAYVPQTDTYIEKDAKI). Residues 430 to 596 (QIDDLIGEIR…TVKKEIRDVI (167 aa)) enclose the Helicase C-terminal domain. The UVR domain occupies 622 to 657 (EELIRTLEAEMKEAAKALDFERAAQLRDIIFELKAE).

The protein belongs to the UvrB family. As to quaternary structure, forms a heterotetramer with UvrA during the search for lesions. Interacts with UvrC in an incision complex.

It is found in the cytoplasm. Its function is as follows. The UvrABC repair system catalyzes the recognition and processing of DNA lesions. A damage recognition complex composed of 2 UvrA and 2 UvrB subunits scans DNA for abnormalities. Upon binding of the UvrA(2)B(2) complex to a putative damaged site, the DNA wraps around one UvrB monomer. DNA wrap is dependent on ATP binding by UvrB and probably causes local melting of the DNA helix, facilitating insertion of UvrB beta-hairpin between the DNA strands. Then UvrB probes one DNA strand for the presence of a lesion. If a lesion is found the UvrA subunits dissociate and the UvrB-DNA preincision complex is formed. This complex is subsequently bound by UvrC and the second UvrB is released. If no lesion is found, the DNA wraps around the other UvrB subunit that will check the other stand for damage. This Geobacillus kaustophilus (strain HTA426) protein is UvrABC system protein B.